Consider the following 160-residue polypeptide: Anaerobic nitrite reductase Glb1-1 (160 aa).

The region spanning 8–157 (GFTEEQEALV…LVNAIKSEMK (150 aa)) is the Globin domain. Positions 41 to 45 (EIAPS) match the Homodimerization motif. Residues Ser-51, Lys-65, His-69, Lys-99, and His-104 each coordinate heme b. The Homodimerization motif lies at 111–123 (DEHFEVTKFALLE).

This sequence belongs to the plant globin family. Homodimer. Requires heme b as cofactor.

The catalysed reaction is Fe(III)-heme b-[protein] + nitric oxide + H2O = Fe(II)-heme b-[protein] + nitrite + 2 H(+). Phytoglobin that reduces nitrite to nitric oxide (NO) under anoxic conditions (e.g. during flooding or in waterlogged soil) and upon root nodulation. Required for general plant development and during nodulation, especially for the onset of symbiosis. Monitors nitric oxide (NO) levels during early phase of the nitrogen-fixing symbiosis and buffers oxygen in functioning nodules. May not function as an oxygen storage or transport protein. Has an unusually high affinity for O(2) through a hexacoordinate heme iron because of a very low dissociation constant. The protein is Anaerobic nitrite reductase Glb1-1 of Medicago truncatula (Barrel medic).